Consider the following 75-residue polypeptide: Exodeoxyribonuclease 7 small subunit (75 aa).

It belongs to the XseB family. Heterooligomer composed of large and small subunits.

It localises to the cytoplasm. It catalyses the reaction Exonucleolytic cleavage in either 5'- to 3'- or 3'- to 5'-direction to yield nucleoside 5'-phosphates.. In terms of biological role, bidirectionally degrades single-stranded DNA into large acid-insoluble oligonucleotides, which are then degraded further into small acid-soluble oligonucleotides. The polypeptide is Exodeoxyribonuclease 7 small subunit (Caldanaerobacter subterraneus subsp. tengcongensis (strain DSM 15242 / JCM 11007 / NBRC 100824 / MB4) (Thermoanaerobacter tengcongensis)).